The primary structure comprises 653 residues: MYLVIIFLPLLGSIISGFFGRKIGVQGAQLITSSFIIITTMLAIFNFFEVGYNNIPLEINLFRWIDSESINILWGFYFDSLTVSMLIPVLIVSSLVHIYSIGYMSHDPHNQRFFSYLSLFTFMMIILVTANNYLLMFLGVEGVGVCSYLLVNFWFTRIAANQSSISAFLTNRVGDCFLTIGMFIIIWSFGNLDYSTVFSLAPYFNQEFITLIGICLLIGAMAKSSQIGLHVWLPQAMEGPTPVSALIHAATMVTAGVYLLMRSSPLIEYSSTVLILCLWLGAITTIFSSIIGLFQQDIKKVIAYSTMSQLGMMVIAIGLSSYNLALFHLVNHAFYKALLFLGAGAVIHSVSDNQDFRKYGGLKPFLPLAYSIMLIASLSLVAIPFMSGFYSKDFILESAYGQFYISSTLVYFIATIGAMFTTLYSVKVLYLTFLTNPNGPLNNYKNVDQGNIFINLPLIILAIFSIFFGYLTKDVFIGLGTSFFIDNRYFIHPSHEIMLDTEFALPTLFKLLPLFFTITLSIIGIMFSEFFGNLLIKFKFTNLGYNIFSLFNQRFLIEFFYNNYITNFVLKLGGQTTKVLYKGSVELLGPYGLEKRLLNLSKNIGSLSTGVITSYALYILIGLIFYVFLLYLNIDNNILLLLLFGIFSTINKK.

16 helical membrane-spanning segments follow: residues 1-21 (MYLV…FFGR), 30-50 (LITS…FFEV), 81-103 (LTVS…SIGY), 120-140 (FTFM…FLGV), 177-197 (FLTI…YSTV), 200-220 (LAPY…LIGA), 241-261 (TPVS…YLLM), 274-294 (LILC…IGLF), 301-319 (VIAY…AIGL), 331-351 (NHAF…HSVS), 365-385 (FLPL…AIPF), 403-423 (FYIS…FTTL), 452-472 (IFIN…GYLT), 511-531 (LLPL…SEFF), 610-630 (GVIT…VFLL), and 631-651 (YLNI…STIN).

It belongs to the complex I subunit 5 family.

It is found in the mitochondrion inner membrane. The enzyme catalyses a ubiquinone + NADH + 5 H(+)(in) = a ubiquinol + NAD(+) + 4 H(+)(out). Its function is as follows. Core subunit of the mitochondrial membrane respiratory chain NADH dehydrogenase (Complex I) that is believed to belong to the minimal assembly required for catalysis. Complex I functions in the transfer of electrons from NADH to the respiratory chain. The immediate electron acceptor for the enzyme is believed to be ubiquinone. The protein is NADH-ubiquinone oxidoreductase chain 5 (ND5) of Trichophyton rubrum (Athlete's foot fungus).